The primary structure comprises 202 residues: Protein-methionine-sulfoxide reductase heme-binding subunit MsrQ (202 aa).

Helical transmembrane passes span 8–28, 42–62, 75–95, 110–130, 147–167, and 169–189; these read LAVF…AWIF, LGLG…LQKL, LGLW…VFIL, PYII…ITSN, LVYL…RADL, and EWTL…PSIA.

It belongs to the MsrQ family. As to quaternary structure, heterodimer of a catalytic subunit (MsrP) and a heme-binding subunit (MsrQ). FMN is required as a cofactor. It depends on heme b as a cofactor.

The protein localises to the cell inner membrane. Its function is as follows. Part of the MsrPQ system that repairs oxidized periplasmic proteins containing methionine sulfoxide residues (Met-O), using respiratory chain electrons. Thus protects these proteins from oxidative-stress damage caused by reactive species of oxygen and chlorine generated by the host defense mechanisms. MsrPQ is essential for the maintenance of envelope integrity under bleach stress, rescuing a wide series of structurally unrelated periplasmic proteins from methionine oxidation. MsrQ provides electrons for reduction to the reductase catalytic subunit MsrP, using the quinone pool of the respiratory chain. This Pseudomonas paraeruginosa (strain DSM 24068 / PA7) (Pseudomonas aeruginosa (strain PA7)) protein is Protein-methionine-sulfoxide reductase heme-binding subunit MsrQ.